A 458-amino-acid chain; its full sequence is Ammonium transporter Rh type B (458 aa).

Over 1–13 (MAGSPSRAAGRRL) the chain is Cytoplasmic. The helical transmembrane segment at 14–34 (QLPLLCLFLQGATAVLFAVFV) threads the bilayer. Over 35 to 61 (RYNHKTDAALWHRGNHSNADNEFYFRY) the chain is Extracellular. Asparagine 49 carries N-linked (GlcNAc...) asparagine glycosylation. A helical transmembrane segment spans residues 62-82 (PSFQDVHAMVFVGFGFLMVFL). The Cytoplasmic portion of the chain corresponds to 83-86 (QRYG). A helical transmembrane segment spans residues 87–107 (FSSVGFTFLLAAFALQWSTLV). The Extracellular portion of the chain corresponds to 108–124 (QGFLHSFHSGHIHVGVE). A helical membrane pass occupies residues 125–145 (SMINADFCAGAVLISFGAVLG). At 146–149 (KTGP) the chain is on the cytoplasmic side. The chain crosses the membrane as a helical span at residues 150 to 170 (AQLLLMALLEVVLFGINEFVL). Residues 171–178 (LHLLGVRD) are Extracellular-facing. Residues 179–201 (AGGSMTIHTFGAYFGLVLSRVLY) form a helical membrane-spanning segment. Over 202 to 219 (RPQLEKSKHRQGSVYHSD) the chain is Cytoplasmic. The chain crosses the membrane as a helical span at residues 220 to 240 (LFAMIGTIFLWIFWPSFNSAL). At 241–251 (TALGAGQHRTA) the chain is on the extracellular side. A helical membrane pass occupies residues 252-272 (LNTYYSLAASTLGTFALSALV). Topologically, residues 273-282 (GEDGRLDMVH) are cytoplasmic. Residues 283–303 (IQNAALAGGVVVGTSSEMMLT) traverse the membrane as a helical segment. Residue proline 304 is a topological domain, extracellular. Residues 305–325 (FGALAAGFLAGTVSTLGYKFF) traverse the membrane as a helical segment. Residues 326–346 (TPILESKFKVQDTCGVHNLHG) lie on the Cytoplasmic side of the membrane. Residues 347-367 (MPGVLGALLGVLVAGLATHEA) traverse the membrane as a helical segment. The Extracellular portion of the chain corresponds to 368–393 (YGDGLESVFPLIAEGQRSATSQAMLQ). The chain crosses the membrane as a helical span at residues 394-414 (LFGLFVTLMFASVGGGLGGLL). At 415 to 458 (LKLPFLDSPPDSQCYEDQVHWQVPGEHEDEAQRPLRVEEADTQA) the chain is on the cytoplasmic side. Residues 416 to 424 (KLPFLDSPP) are interaction with ANK3. A Basolateral sorting signal motif is present at residues 429 to 432 (YEDQ). Positions 439-458 (GEHEDEAQRPLRVEEADTQA) are disordered. The span at 444–458 (EAQRPLRVEEADTQA) shows a compositional bias: basic and acidic residues.

This sequence belongs to the ammonium transporter (TC 2.A.49) family. Rh subfamily. Interacts (via C-terminus) with ANK2 and ANK3; required for targeting to the basolateral membrane. Post-translationally, N-glycosylated.

It localises to the cell membrane. The protein localises to the basolateral cell membrane. The catalysed reaction is NH4(+)(in) = NH4(+)(out). It catalyses the reaction methylamine(out) = methylamine(in). The enzyme catalyses CO2(out) = CO2(in). In terms of biological role, ammonium transporter involved in the maintenance of acid-base homeostasis. Transports ammonium and its related derivative methylammonium across the basolateral plasma membrane of epithelial cells likely contributing to renal transepithelial ammonia transport and ammonia metabolism. May transport either NH4(+) or NH3 ammonia species predominantly mediating an electrogenic NH4(+) transport. May act as a CO2 channel providing for renal acid secretion. This chain is Ammonium transporter Rh type B (RHBG), found in Macaca mulatta (Rhesus macaque).